The sequence spans 732 residues: Polyribonucleotide nucleotidyltransferase (732 aa).

Residues aspartate 503 and aspartate 509 each coordinate Mg(2+). The region spanning 570 to 629 is the KH domain; it reads PRLTAIQVPVESIGLIIGKGGETIRSITEETGAEINIEDDGTVTIACSSNEGTKGAVEII. The S1 motif domain occupies 639–713; the sequence is GTVYIGKVRD…GKTRFALSIK (75 aa).

It belongs to the polyribonucleotide nucleotidyltransferase family. Mg(2+) is required as a cofactor.

The protein localises to the cytoplasm. It carries out the reaction RNA(n+1) + phosphate = RNA(n) + a ribonucleoside 5'-diphosphate. Its function is as follows. Involved in mRNA degradation. Catalyzes the phosphorolysis of single-stranded polyribonucleotides processively in the 3'- to 5'-direction. This is Polyribonucleotide nucleotidyltransferase from Chlorobium phaeovibrioides (strain DSM 265 / 1930) (Prosthecochloris vibrioformis (strain DSM 265)).